The sequence spans 194 residues: RNA polymerase II subunit A C-terminal domain phosphatase SSU72 like protein 6 (194 aa).

Belongs to the SSU72 phosphatase family.

It localises to the nucleus. The catalysed reaction is O-phospho-L-seryl-[protein] + H2O = L-seryl-[protein] + phosphate. The enzyme catalyses O-phospho-L-threonyl-[protein] + H2O = L-threonyl-[protein] + phosphate. Its function is as follows. Protein phosphatase that catalyzes the dephosphorylation of the C-terminal domain of RNA polymerase II. Plays a role in RNA processing and termination. The sequence is that of RNA polymerase II subunit A C-terminal domain phosphatase SSU72 like protein 6 from Homo sapiens (Human).